Consider the following 442-residue polypeptide: Tyrosine--tRNA ligase (442 aa).

Position 55 (Y55) interacts with L-tyrosine. A 'HIGH' region motif is present at residues 60-69; it reads PTAPSLHLGN. Residues Y190 and Q194 each contribute to the L-tyrosine site. The 'KMSKS' region signature appears at 250–254; it reads KFGKS. K253 contributes to the ATP binding site. Residues 373–438 enclose the S4 RNA-binding domain; sequence VAIAQALVDT…GKKTLAGVFV (66 aa).

It belongs to the class-I aminoacyl-tRNA synthetase family. TyrS type 1 subfamily. As to quaternary structure, homodimer.

It localises to the cytoplasm. It catalyses the reaction tRNA(Tyr) + L-tyrosine + ATP = L-tyrosyl-tRNA(Tyr) + AMP + diphosphate + H(+). Its function is as follows. Catalyzes the attachment of tyrosine to tRNA(Tyr) in a two-step reaction: tyrosine is first activated by ATP to form Tyr-AMP and then transferred to the acceptor end of tRNA(Tyr). This chain is Tyrosine--tRNA ligase, found in Leifsonia xyli subsp. xyli (strain CTCB07).